Consider the following 173-residue polypeptide: Nascent polypeptide-associated complex subunit alpha (173 aa).

The 65-residue stretch at 21–85 (VVHAEKAQKL…VTVEDMAAQA (65 aa)) folds into the NAC-A/B domain. The segment at 89–117 (NESQKQATETKEEAAITEESGDAQPADTA) is disordered. The residue at position 122 (S122) is a Phosphoserine. Residues 134–171 (VDAKDIELVMAQANVSRAKAVTALKENNSDVVNAIMSL) enclose the UBA domain.

The protein belongs to the NAC-alpha family. In terms of assembly, part of the nascent polypeptide-associated complex (NAC), consisting of ucp15 and btf3. NAC associates with ribosomes via btf3.

The protein resides in the cytoplasm. The protein localises to the nucleus. Component of the nascent polypeptide-associated complex (NAC), a dynamic component of the ribosomal exit tunnel, protecting the emerging polypeptides from interaction with other cytoplasmic proteins to ensure appropriate nascent protein targeting. The NAC complex also promotes mitochondrial protein import by enhancing productive ribosome interactions with the outer mitochondrial membrane and blocks the inappropriate interaction of ribosomes translating non-secretory nascent polypeptides with translocation sites in the membrane of the endoplasmic reticulum. Ucp15 may also be involved in transcription regulation. This Schizosaccharomyces pombe (strain 972 / ATCC 24843) (Fission yeast) protein is Nascent polypeptide-associated complex subunit alpha (egd2).